Here is a 303-residue protein sequence, read N- to C-terminus: Coenzyme PQQ synthesis protein B (303 aa).

Belongs to the PqqB family.

It functions in the pathway cofactor biosynthesis; pyrroloquinoline quinone biosynthesis. May be involved in the transport of PQQ or its precursor to the periplasm. The polypeptide is Coenzyme PQQ synthesis protein B (Rhizobium meliloti (strain 1021) (Ensifer meliloti)).